Here is a 440-residue protein sequence, read N- to C-terminus: Thymidine phosphorylase (440 aa).

The protein belongs to the thymidine/pyrimidine-nucleoside phosphorylase family. As to quaternary structure, homodimer.

It carries out the reaction thymidine + phosphate = 2-deoxy-alpha-D-ribose 1-phosphate + thymine. It functions in the pathway pyrimidine metabolism; dTMP biosynthesis via salvage pathway; dTMP from thymine: step 1/2. Its function is as follows. The enzymes which catalyze the reversible phosphorolysis of pyrimidine nucleosides are involved in the degradation of these compounds and in their utilization as carbon and energy sources, or in the rescue of pyrimidine bases for nucleotide synthesis. The protein is Thymidine phosphorylase of Escherichia coli O139:H28 (strain E24377A / ETEC).